We begin with the raw amino-acid sequence, 469 residues long: Glutamate--tRNA ligase (469 aa).

The 'HIGH' region signature appears at 11 to 21; the sequence is PSPTGFIHLGN. Positions 114–131 are enriched in basic and acidic residues; the sequence is QREAGEKPRYDGTWRPEP. A disordered region spans residues 114–139; sequence QREAGEKPRYDGTWRPEPGKVLPEPP. A 'KMSKS' region motif is present at residues 243–247; sequence KMSKR. Residue lysine 246 participates in ATP binding.

Belongs to the class-I aminoacyl-tRNA synthetase family. Glutamate--tRNA ligase type 1 subfamily. As to quaternary structure, monomer.

It is found in the cytoplasm. It catalyses the reaction tRNA(Glu) + L-glutamate + ATP = L-glutamyl-tRNA(Glu) + AMP + diphosphate. Catalyzes the attachment of glutamate to tRNA(Glu) in a two-step reaction: glutamate is first activated by ATP to form Glu-AMP and then transferred to the acceptor end of tRNA(Glu). The sequence is that of Glutamate--tRNA ligase from Paraburkholderia xenovorans (strain LB400).